The chain runs to 450 residues: MKVIDQFKNKKVLVLGLAKSGESAARLLDKLGAIVTVNDGKPFEDNPAAQSLLEEGIKVITGGHPLELLDEEFALMVKNPGIPYNNPMIEKALAKRIPVLTEVELAYLISEAPIIGITGSNGKTTTTTMIGEVLTAAGQHGLLSGNIGYPASQVAQIASDKDTLVMELSSFQLMGVQEFHPEIAVITNLMPTHIDYHGSFSEYVAAKWNIQNKMTAADFLVLNFNQDLAKDLTSKTEATVVPFSTLEKVDGAYLEDGQLYFRGEVVMAANEIGVPGSHNVENALATIAVAKLRDVDNQTIKETLSAFGGVKHRLQFVDDIKGVKFYNDSKSTNILATQKALSGFDNSKVVLIAGGLDRGNEFDELVPDITGLKKMVILGQSAERVKRAADKAGVAYVEATDIADATRKAYELATQGDVVLLSPANASWDMYANFEVRGDLFIDTVAELKE.

Position 119-125 (Gly119–Thr125) interacts with ATP.

Belongs to the MurCDEF family.

The protein resides in the cytoplasm. It carries out the reaction UDP-N-acetyl-alpha-D-muramoyl-L-alanine + D-glutamate + ATP = UDP-N-acetyl-alpha-D-muramoyl-L-alanyl-D-glutamate + ADP + phosphate + H(+). It participates in cell wall biogenesis; peptidoglycan biosynthesis. Functionally, cell wall formation. Catalyzes the addition of glutamate to the nucleotide precursor UDP-N-acetylmuramoyl-L-alanine (UMA). The polypeptide is UDP-N-acetylmuramoylalanine--D-glutamate ligase (Streptococcus pneumoniae (strain ATCC BAA-255 / R6)).